Here is a 350-residue protein sequence, read N- to C-terminus: tRNA pseudouridine synthase D (350 aa).

Catalysis depends on Asp79, which acts as the Nucleophile. The 153-residue stretch at 154–306 folds into the TRUD domain; that stretch reads GAPNYYGPQR…EQERRPIVLY (153 aa).

It belongs to the pseudouridine synthase TruD family.

The enzyme catalyses uridine(13) in tRNA = pseudouridine(13) in tRNA. Its function is as follows. Responsible for synthesis of pseudouridine from uracil-13 in transfer RNAs. This is tRNA pseudouridine synthase D from Pseudoalteromonas atlantica (strain T6c / ATCC BAA-1087).